The sequence spans 234 residues: Large ribosomal subunit protein uL1 (234 aa).

The protein belongs to the universal ribosomal protein uL1 family. In terms of assembly, part of the 50S ribosomal subunit.

Functionally, binds directly to 23S rRNA. The L1 stalk is quite mobile in the ribosome, and is involved in E site tRNA release. Protein L1 is also a translational repressor protein, it controls the translation of the L11 operon by binding to its mRNA. Its function is as follows. Peptides originating from the N-terminal end of L1 have antibacterial activity against bacteria such as E.coli and B.megaterium and modest antifungal activities. Has no effect on H.pylori itself. Peptides are not hemolytic against mammalian cells. These peptides may be released in the stomach during altruistic lysis to kill other fast growing bacteria. The polypeptide is Large ribosomal subunit protein uL1 (Helicobacter pylori (strain ATCC 700392 / 26695) (Campylobacter pylori)).